The following is a 196-amino-acid chain: UPF0200 protein MK0400 (196 aa).

Glycine 7–glycine 14 contacts ATP.

This sequence belongs to the UPF0200 family.

This is UPF0200 protein MK0400 from Methanopyrus kandleri (strain AV19 / DSM 6324 / JCM 9639 / NBRC 100938).